Reading from the N-terminus, the 123-residue chain is Small ribosomal subunit protein uS13 (123 aa).

Positions 93-123 (HRKGLPVRGQNTKNNARTRKGPAKAIAGKKK) are disordered. Positions 108–123 (ARTRKGPAKAIAGKKK) are enriched in basic residues.

This sequence belongs to the universal ribosomal protein uS13 family. In terms of assembly, part of the 30S ribosomal subunit. Forms a loose heterodimer with protein S19. Forms two bridges to the 50S subunit in the 70S ribosome.

In terms of biological role, located at the top of the head of the 30S subunit, it contacts several helices of the 16S rRNA. In the 70S ribosome it contacts the 23S rRNA (bridge B1a) and protein L5 of the 50S subunit (bridge B1b), connecting the 2 subunits; these bridges are implicated in subunit movement. Contacts the tRNAs in the A and P-sites. This chain is Small ribosomal subunit protein uS13, found in Leuconostoc citreum (strain KM20).